The following is a 382-amino-acid chain: uncharacterized protein (382 aa).

This is an uncharacterized protein from Bacillus subtilis (strain 168).